Consider the following 448-residue polypeptide: N-succinylarginine dihydrolase (448 aa).

Residues 19 to 28 (GGLSYGNVAS), Asn110, and 137 to 138 (HR) contribute to the substrate site. Glu174 is a catalytic residue. Arg214 contacts substrate. The active site involves His250. Substrate-binding residues include Asp252 and Asn365. The Nucleophile role is filled by Cys371.

Belongs to the succinylarginine dihydrolase family. Homodimer.

It catalyses the reaction N(2)-succinyl-L-arginine + 2 H2O + 2 H(+) = N(2)-succinyl-L-ornithine + 2 NH4(+) + CO2. It functions in the pathway amino-acid degradation; L-arginine degradation via AST pathway; L-glutamate and succinate from L-arginine: step 2/5. Functionally, catalyzes the hydrolysis of N(2)-succinylarginine into N(2)-succinylornithine, ammonia and CO(2). The sequence is that of N-succinylarginine dihydrolase from Pseudomonas syringae pv. tomato (strain ATCC BAA-871 / DC3000).